The primary structure comprises 513 residues: Bone morphogenetic protein 6 (513 aa).

An N-terminal signal peptide occupies residues 1 to 20; sequence MPGLGRRAQWLCWWWGLLCS. Residues 21-374 constitute a propeptide that is removed on maturation; it reads CCGPPPLRPP…VSEVHVRTTR (354 aa). Disordered regions lie at residues 38-66, 89-131, and 145-200; these read AAGG…SSGF, LPHR…RLKS, and ADND…ASPL. The span at 98–121 shows a compositional bias: low complexity; that stretch reads GLQQPQPPALRQQEEQQQQQQLPR. The segment covering 158 to 172 has biased composition (polar residues); it reads QQSWPHEAASSSQRR. N-linked (GlcNAc...) asparagine glycosylation is found at asparagine 241, asparagine 269, asparagine 386, asparagine 404, and asparagine 454. The segment at 373–398 is disordered; that stretch reads TRSASSRRRQQSRNRSTQSQDVARVS. Intrachain disulfides connect cysteine 412–cysteine 478, cysteine 441–cysteine 510, and cysteine 445–cysteine 512.

Belongs to the TGF-beta family. In terms of assembly, interacts with SOSTDC1. Interacts (when glycosylated) with type I receptor ACVR1; the interaction may induce HAMP expression. Interacts with type II receptor ACVR2B. Interacts with Hemojuvelin/HJV. Interacts with ERFE; the interaction inhibits BMP-induced transcription of HAMP. Interacts with BMPR1A/ALK3. Forms heterodimers with BMP2 in vitro; the heterodimer then binds to its receptor BMPR1A /ALK3 and may induce HAMP expression. Post-translationally, glycosylated at Asn-454. Glycosylation is crucial for recognition by the activin receptor type I/ACVR1.

It is found in the secreted. Growth factor of the TGF-beta superfamily that plays essential roles in many developmental processes including cartilage and bone formation. Also plays an important role in the regulation of HAMP/hepcidin expression and iron metabolism by acting as a ligand for hemojuvelin/HJV. Also acts to promote expression of HAMP, potentially via the interaction with its receptor BMPR1A/ALK3. Initiates the canonical BMP signaling cascade by associating with type I receptor ACVR1 and type II receptor ACVR2B. In turn, ACVR1 propagates signal by phosphorylating SMAD1/5/8 that travel to the nucleus and act as activators and repressors of transcription of target. Can also signal through non-canonical pathway such as TAZ-Hippo signaling cascade to modulate VEGF signaling by regulating VEGFR2 expression. The protein is Bone morphogenetic protein 6 (BMP6) of Homo sapiens (Human).